The sequence spans 192 residues: Putative molybdenum cofactor guanylyltransferase (192 aa).

GTP is bound by residues 8–10 (LAG), Lys-21, Asp-67, and Asp-101. Asp-101 lines the Mg(2+) pocket.

This sequence belongs to the MobA family. In terms of assembly, monomer. Requires Mg(2+) as cofactor.

The protein resides in the cytoplasm. It carries out the reaction Mo-molybdopterin + GTP + H(+) = Mo-molybdopterin guanine dinucleotide + diphosphate. Transfers a GMP moiety from GTP to Mo-molybdopterin (Mo-MPT) cofactor (Moco or molybdenum cofactor) to form Mo-molybdopterin guanine dinucleotide (Mo-MGD) cofactor. The polypeptide is Putative molybdenum cofactor guanylyltransferase (Neisseria meningitidis serogroup B (strain ATCC BAA-335 / MC58)).